We begin with the raw amino-acid sequence, 210 residues long: Protein GrpE (210 aa).

The disordered stretch occupies residues 1 to 42; the sequence is MANEERTIPETNVASERPEDPVESQTRAEGGEQIQEAAPETA.

The protein belongs to the GrpE family. In terms of assembly, homodimer.

The protein localises to the cytoplasm. Its function is as follows. Participates actively in the response to hyperosmotic and heat shock by preventing the aggregation of stress-denatured proteins, in association with DnaK and GrpE. It is the nucleotide exchange factor for DnaK and may function as a thermosensor. Unfolded proteins bind initially to DnaJ; upon interaction with the DnaJ-bound protein, DnaK hydrolyzes its bound ATP, resulting in the formation of a stable complex. GrpE releases ADP from DnaK; ATP binding to DnaK triggers the release of the substrate protein, thus completing the reaction cycle. Several rounds of ATP-dependent interactions between DnaJ, DnaK and GrpE are required for fully efficient folding. The chain is Protein GrpE from Nitrosococcus oceani (strain ATCC 19707 / BCRC 17464 / JCM 30415 / NCIMB 11848 / C-107).